Consider the following 152-residue polypeptide: 2-C-methyl-D-erythritol 2,4-cyclodiphosphate synthase (152 aa).

Asp-8 and His-10 together coordinate a divalent metal cation. 4-CDP-2-C-methyl-D-erythritol 2-phosphate contacts are provided by residues 8–10 (DSH) and 34–35 (HS). His-42 is a binding site for a divalent metal cation. Residues 56-58 (DIG) and 61-65 (FPDTD) contribute to the 4-CDP-2-C-methyl-D-erythritol 2-phosphate site.

It belongs to the IspF family. As to quaternary structure, homotrimer. A divalent metal cation serves as cofactor.

It carries out the reaction 4-CDP-2-C-methyl-D-erythritol 2-phosphate = 2-C-methyl-D-erythritol 2,4-cyclic diphosphate + CMP. Its pathway is isoprenoid biosynthesis; isopentenyl diphosphate biosynthesis via DXP pathway; isopentenyl diphosphate from 1-deoxy-D-xylulose 5-phosphate: step 4/6. In terms of biological role, involved in the biosynthesis of isopentenyl diphosphate (IPP) and dimethylallyl diphosphate (DMAPP), two major building blocks of isoprenoid compounds. Catalyzes the conversion of 4-diphosphocytidyl-2-C-methyl-D-erythritol 2-phosphate (CDP-ME2P) to 2-C-methyl-D-erythritol 2,4-cyclodiphosphate (ME-CPP) with a corresponding release of cytidine 5-monophosphate (CMP). In Thermus thermophilus (strain ATCC BAA-163 / DSM 7039 / HB27), this protein is 2-C-methyl-D-erythritol 2,4-cyclodiphosphate synthase.